The sequence spans 268 residues: Orotidine 5'-phosphate decarboxylase (268 aa).

Substrate is bound by residues Asp-39, 61 to 63 (KTH), 93 to 102 (DRKFADIGNT), Tyr-219, and Arg-237. The Proton donor role is filled by Lys-95.

This sequence belongs to the OMP decarboxylase family.

The catalysed reaction is orotidine 5'-phosphate + H(+) = UMP + CO2. The protein operates within pyrimidine metabolism; UMP biosynthesis via de novo pathway; UMP from orotate: step 2/2. This is Orotidine 5'-phosphate decarboxylase (URA3) from Pachysolen tannophilus (Yeast).